Here is a 168-residue protein sequence, read N- to C-terminus: MIVLGVDPGLANLGLGLVEGDVRKARHLYHVCLTTESAWLMPRRLQYLHEEVARLLAEYRPDAVAIEDQILRRQADVAFKVGQAFGVVQLACAQAGVPIHAYGPMQVKRSLVGTGRADKEQIIYMVKATLGIRELFNNHAADALALALTHLAHQPMRAASTRLAQKSA.

Active-site residues include aspartate 7, glutamate 67, and histidine 139. Mg(2+)-binding residues include aspartate 7, glutamate 67, and histidine 139.

This sequence belongs to the RuvC family. In terms of assembly, homodimer which binds Holliday junction (HJ) DNA. The HJ becomes 2-fold symmetrical on binding to RuvC with unstacked arms; it has a different conformation from HJ DNA in complex with RuvA. In the full resolvosome a probable DNA-RuvA(4)-RuvB(12)-RuvC(2) complex forms which resolves the HJ. The cofactor is Mg(2+).

Its subcellular location is the cytoplasm. It carries out the reaction Endonucleolytic cleavage at a junction such as a reciprocal single-stranded crossover between two homologous DNA duplexes (Holliday junction).. In terms of biological role, the RuvA-RuvB-RuvC complex processes Holliday junction (HJ) DNA during genetic recombination and DNA repair. Endonuclease that resolves HJ intermediates. Cleaves cruciform DNA by making single-stranded nicks across the HJ at symmetrical positions within the homologous arms, yielding a 5'-phosphate and a 3'-hydroxyl group; requires a central core of homology in the junction. The consensus cleavage sequence is 5'-(A/T)TT(C/G)-3'. Cleavage occurs on the 3'-side of the TT dinucleotide at the point of strand exchange. HJ branch migration catalyzed by RuvA-RuvB allows RuvC to scan DNA until it finds its consensus sequence, where it cleaves and resolves the cruciform DNA. This chain is Crossover junction endodeoxyribonuclease RuvC, found in Deinococcus geothermalis (strain DSM 11300 / CIP 105573 / AG-3a).